Consider the following 61-residue polypeptide: Large ribosomal subunit protein uL30 (61 aa).

Belongs to the universal ribosomal protein uL30 family. Part of the 50S ribosomal subunit.

The protein is Large ribosomal subunit protein uL30 of Colwellia psychrerythraea (strain 34H / ATCC BAA-681) (Vibrio psychroerythus).